The sequence spans 333 residues: Taste receptor type 2 member 123 (333 aa).

Residues 1 to 14 are Extracellular-facing; that stretch reads MFSQKTNYSHLFTF. A helical membrane pass occupies residues 15–37; that stretch reads SIIFYVEIVTGILGNGFIALVNI. Residues 38–57 lie on the Cytoplasmic side of the membrane; it reads MDWLKRRRISTADQILTALA. A helical transmembrane segment spans residues 58 to 77; that stretch reads LTRLIYVWSVLICILLLFLC. At 78–91 the chain is on the extracellular side; that stretch reads PHLSMRPEMFTAIG. The helical transmembrane segment at 92–114 threads the bilayer; it reads VIWVVDNHFSIWLATCLGVFYFL. The Cytoplasmic portion of the chain corresponds to 115 to 133; sequence KIASFSNSLFLYLKWRVKK. Residues 134–156 traverse the membrane as a helical segment; sequence VVLMIILISLIFLMLNISSLGMY. Over 157–204 the chain is Extracellular; that stretch reads DHFSIDVYEGNMSYNLVDSTHFPRIFLFTNSSKVFLIANSSHVFLPIN. Asparagine 167, asparagine 186, and asparagine 195 each carry an N-linked (GlcNAc...) asparagine glycan. A helical membrane pass occupies residues 205-227; that stretch reads SLFMLIPFTVSLVAFFVLFLSLW. Residues 228-250 lie on the Cytoplasmic side of the membrane; sequence KHHKKMQVNAKGPRDASTMAHTK. The helical transmembrane segment at 251 to 273 threads the bilayer; sequence ALQIGFSFLLLYAIYLLFIITGI. The Extracellular segment spans residues 274 to 282; sequence LNLDLMRCI. Residues 283-305 form a helical membrane-spanning segment; sequence VILLFDHISGAVFSISHSFVLIL. At 306-333 the chain is on the cytoplasmic side; sequence GNSKLRQATLSVLPCLRCRSKDMDTVVF.

Belongs to the G-protein coupled receptor T2R family. As to expression, expressed in subsets of taste receptor cells of the tongue and palate epithelium and exclusively in gustducin-positive cells. Expressed in the antrum and fundus (part of the stomach), duodenum and in gastric endocrine cells.

The protein localises to the membrane. In terms of biological role, gustducin-coupled receptor implicated in the perception of bitter compounds in the oral cavity and the gastrointestinal tract. Signals through PLCB2 and the calcium-regulated cation channel TRPM5. The sequence is that of Taste receptor type 2 member 123 (Tas2r123) from Rattus norvegicus (Rat).